The primary structure comprises 145 residues: 3-hydroxyacyl-[acyl-carrier-protein] dehydratase FabZ (145 aa).

His-48 is a catalytic residue.

It belongs to the thioester dehydratase family. FabZ subfamily.

The protein resides in the cytoplasm. The enzyme catalyses a (3R)-hydroxyacyl-[ACP] = a (2E)-enoyl-[ACP] + H2O. Functionally, involved in unsaturated fatty acids biosynthesis. Catalyzes the dehydration of short chain beta-hydroxyacyl-ACPs and long chain saturated and unsaturated beta-hydroxyacyl-ACPs. The protein is 3-hydroxyacyl-[acyl-carrier-protein] dehydratase FabZ of Marinomonas sp. (strain MWYL1).